A 177-amino-acid chain; its full sequence is MSRVGKAPIALPKGAEVNVAAGVLSVKGPLGTLSQPIHSLVKVNVAEGTLTFEPADESREANALQGTMRALAANMVKGVTTGFERKLQLVGVGYRAQLQGAALKLQLGFSHDVIHEMPEGVKAETPTQTEIIIKGADKQKVGQVAAEVRAYRPPEPYKGKGVRYADERVILKETKKK.

The protein belongs to the universal ribosomal protein uL6 family. In terms of assembly, part of the 50S ribosomal subunit.

Its function is as follows. This protein binds to the 23S rRNA, and is important in its secondary structure. It is located near the subunit interface in the base of the L7/L12 stalk, and near the tRNA binding site of the peptidyltransferase center. This chain is Large ribosomal subunit protein uL6, found in Cupriavidus metallidurans (strain ATCC 43123 / DSM 2839 / NBRC 102507 / CH34) (Ralstonia metallidurans).